The sequence spans 204 residues: uncharacterized protein (204 aa).

Functionally, possibly involved in pGI2 replication mechanism. This is an uncharacterized protein from Bacillus thuringiensis.